Here is a 268-residue protein sequence, read N- to C-terminus: Tryptophan synthase alpha chain (268 aa).

Catalysis depends on proton acceptor residues E49 and D60.

The protein belongs to the TrpA family. In terms of assembly, tetramer of two alpha and two beta chains.

It catalyses the reaction (1S,2R)-1-C-(indol-3-yl)glycerol 3-phosphate + L-serine = D-glyceraldehyde 3-phosphate + L-tryptophan + H2O. The protein operates within amino-acid biosynthesis; L-tryptophan biosynthesis; L-tryptophan from chorismate: step 5/5. Its function is as follows. The alpha subunit is responsible for the aldol cleavage of indoleglycerol phosphate to indole and glyceraldehyde 3-phosphate. The protein is Tryptophan synthase alpha chain of Yersinia pseudotuberculosis serotype O:3 (strain YPIII).